The chain runs to 621 residues: tRNA uridine 5-carboxymethylaminomethyl modification enzyme MnmG (621 aa).

17-22 provides a ligand contact to FAD; the sequence is GGGHAG. Residue 276-290 participates in NAD(+) binding; the sequence is GPRYCPSIEDKIMKF.

It belongs to the MnmG family. Homodimer. Heterotetramer of two MnmE and two MnmG subunits. FAD is required as a cofactor.

The protein resides in the cytoplasm. In terms of biological role, NAD-binding protein involved in the addition of a carboxymethylaminomethyl (cmnm) group at the wobble position (U34) of certain tRNAs, forming tRNA-cmnm(5)s(2)U34. The protein is tRNA uridine 5-carboxymethylaminomethyl modification enzyme MnmG of Zymomonas mobilis subsp. mobilis (strain ATCC 31821 / ZM4 / CP4).